We begin with the raw amino-acid sequence, 141 residues long: Hemoglobin subunit beta-C (141 aa).

In terms of domain architecture, Globin spans 1-141 (PNKALITGFW…VASALAHRYH (141 aa)). His-58 and His-87 together coordinate heme b.

Belongs to the globin family. In terms of assembly, heterotetramer of two alpha chains and two beta chains. In terms of tissue distribution, red blood cells.

Involved in oxygen transport from the lung to the various peripheral tissues. In Ovis aries musimon (Mouflon), this protein is Hemoglobin subunit beta-C (HBBC).